The following is a 305-amino-acid chain: Aquaporin-1 (305 aa).

A disordered region spans residues 1–34 (MSSNDSNDTDKQHTRLDPTGVDDAYIPPEQPETK). The Cytoplasmic segment spans residues 1–48 (MSSNDSNDTDKQHTRLDPTGVDDAYIPPEQPETKHHRFKISKDTLRNH). Residues 49–69 (FIAAAGEFCGTFMFLWCAYVI) traverse the membrane as a helical segment. The Extracellular segment spans residues 70–91 (CNVANHDVALVAAPDGSHPGQL). Residues 92-112 (IMIAIGFGFSVMFSIWCFAGV) form a helical membrane-spanning segment. The Cytoplasmic segment spans residues 113–136 (SGGALNPAMSLSLCLARAVSPTRC). An NPA 1 motif is present at residues 118 to 120 (NPA). A helical membrane pass occupies residues 137–157 (VVMWVSQIVAGMAAGGAASAM). The Extracellular segment spans residues 158–176 (TPGEVLFANSLGLGCSRTR). Residues 177-197 (GLFLEMFGTAILCLTVLMTAV) traverse the membrane as a helical segment. Residues 198–203 (EKRETN) lie on the Cytoplasmic side of the membrane. The chain crosses the membrane as a helical span at residues 204 to 224 (FMAALPIGISLFIAHVALTAY). Residues 225–248 (TGTGVNPARSLGAAVAARYFPHYH) are Extracellular-facing. Positions 230–232 (NPA) match the NPA 2 motif. Residues 249–269 (WIYWIGTLLGSILAWSVWQLL) traverse the membrane as a helical segment. At 270–305 (QILDYTTYVTAEKAASTKEKAQKKGETSSSSAVAEV) the chain is on the cytoplasmic side. Basic and acidic residues predominate over residues 286–295 (TKEKAQKKGE). The disordered stretch occupies residues 286–305 (TKEKAQKKGETSSSSAVAEV). Over residues 296–305 (TSSSSAVAEV) the composition is skewed to polar residues.

Belongs to the MIP/aquaporin (TC 1.A.8) family.

It is found in the endoplasmic reticulum membrane. The protein resides in the cell membrane. Its function is as follows. Water channel required to facilitate the transport of water across membranes. Involved in sporulation, freeze tolerance and osmotolerance. Is non-functional in most laboratory strains. The polypeptide is Aquaporin-1 (AQY1) (Saccharomyces cerevisiae (strain YJM789) (Baker's yeast)).